A 101-amino-acid polypeptide reads, in one-letter code: Gastrin (101 aa).

The first 21 residues, 1 to 21 (MQRLCVYVLIFALALAAFSEA), serve as a signal peptide directing secretion. The interval 22 to 82 (SWKPRSQQPD…SKKQGPWLEE (61 aa)) is disordered. Q59 is modified (pyrrolidone carboxylic acid; in form big gastrin). Q76 is subject to Pyrrolidone carboxylic acid; in form gastrin. A Sulfotyrosine; partial modification is found at Y87. The residue at position 92 (F92) is a Phenylalanine amide. S96 bears the Phosphoserine mark. Residues 96–101 (SAEDEN) constitute a propeptide, removed in mature form.

This sequence belongs to the gastrin/cholecystokinin family. Post-translationally, two different processing pathways probably exist in antral G-cells. In the dominant pathway progastrin is cleaved at three sites resulting in two major bioactive gastrins, gastrin-34 and gastrin-17. In the putative alternative pathway, progastrin may be processed only at the most C-terminal dibasic site resulting in the synthesis of gastrin-71. In terms of processing, sulfation enhances proteolytic processing, and blocks peptide degradation. Levels of sulfation differ between proteolytically-cleaved gastrins. Thus, gastrin-6 is almost 73% sulfated, whereas the larger gastrins are less than 50% sulfated. Sulfation levels are also tissue-specific.

The protein resides in the secreted. In terms of biological role, gastrin stimulates the stomach mucosa to produce and secrete hydrochloric acid and the pancreas to secrete its digestive enzymes. It also stimulates smooth muscle contraction and increases blood circulation and water secretion in the stomach and intestine. The protein is Gastrin (GAST) of Homo sapiens (Human).